Here is a 289-residue protein sequence, read N- to C-terminus: Acetyl-coenzyme A carboxylase carboxyl transferase subunit beta (289 aa).

The region spanning 24–289 (LWTNCESCGQ…RQKTVSDAAA (266 aa)) is the CoA carboxyltransferase N-terminal domain. Residues Cys-28, Cys-31, Cys-47, and Cys-50 each coordinate Zn(2+). A C4-type zinc finger spans residues 28-50 (CESCGQMMLTKELERSEKVCPHC).

It belongs to the AccD/PCCB family. Acetyl-CoA carboxylase is a heterohexamer composed of biotin carboxyl carrier protein (AccB), biotin carboxylase (AccC) and two subunits each of ACCase subunit alpha (AccA) and ACCase subunit beta (AccD). It depends on Zn(2+) as a cofactor.

The protein localises to the cytoplasm. It carries out the reaction N(6)-carboxybiotinyl-L-lysyl-[protein] + acetyl-CoA = N(6)-biotinyl-L-lysyl-[protein] + malonyl-CoA. Its pathway is lipid metabolism; malonyl-CoA biosynthesis; malonyl-CoA from acetyl-CoA: step 1/1. Its function is as follows. Component of the acetyl coenzyme A carboxylase (ACC) complex. Biotin carboxylase (BC) catalyzes the carboxylation of biotin on its carrier protein (BCCP) and then the CO(2) group is transferred by the transcarboxylase to acetyl-CoA to form malonyl-CoA. This Gluconobacter oxydans (strain 621H) (Gluconobacter suboxydans) protein is Acetyl-coenzyme A carboxylase carboxyl transferase subunit beta.